We begin with the raw amino-acid sequence, 512 residues long: Cytochrome P450 monooxygenase pbrB (512 aa).

A helical membrane pass occupies residues 6-29; the sequence is LSFPAAVGAAFGAFAIYVVARCIY. C452 is a heme binding site.

It belongs to the cytochrome P450 family. Heme is required as a cofactor.

The protein resides in the membrane. It functions in the pathway secondary metabolite biosynthesis; terpenoid biosynthesis. Its function is as follows. Cytochrome P450 monooxygenase; part of the gene cluster that mediates the biosynthesis of the sesquiterpenoid aspterric acid (AA), an inhibitor of dihydroxy-acid dehydratase (DHAD) effective as an herbicide. PbrB catalyzes the second step within the pathway and converts (-)-daucane produced by the terpene cyclase pbrA into an alpha-epoxy carboxylate intermediate which is further converted into the tricyclic aspterric acid by the cytochrome P450 monooxygenase pbrC. This is Cytochrome P450 monooxygenase pbrB from Penicillium brasilianum.